The following is a 528-amino-acid chain: Phosphoenolpyruvate carboxykinase (ATP) (528 aa).

Residues Arg-56, Tyr-192, and Lys-198 each contribute to the substrate site. ATP-binding positions include Lys-198, His-217, and 233 to 241 (GLSGTGKTT). Residues Lys-198 and His-217 each coordinate Mn(2+). Mn(2+) is bound at residue Asp-254. Glu-282, Arg-319, and Thr-444 together coordinate ATP. A substrate-binding site is contributed by Arg-319.

The protein belongs to the phosphoenolpyruvate carboxykinase (ATP) family. Mn(2+) serves as cofactor.

Its subcellular location is the cytoplasm. The catalysed reaction is oxaloacetate + ATP = phosphoenolpyruvate + ADP + CO2. The protein operates within carbohydrate biosynthesis; gluconeogenesis. Functionally, involved in the gluconeogenesis. Catalyzes the conversion of oxaloacetate (OAA) to phosphoenolpyruvate (PEP) through direct phosphoryl transfer between the nucleoside triphosphate and OAA. The polypeptide is Phosphoenolpyruvate carboxykinase (ATP) (Geobacillus thermodenitrificans (strain NG80-2)).